The following is a 194-amino-acid chain: MIGLRPAFSTMLFLLLLTGGVYPLLTTALGQWWFPWQANGSLIHKDNVIRGSALIGQSFTAAGYFHGRPSATADTPYNPLASGGSNLAASNPELDAQIQARVAALRAANPQASSAVPVELTTASASGLDNNLTPGAAAWQIPRVAAARQLPVEQVAQLVAEYTHRPLARFLGQPVVNIVELNLALDALQGHRAK.

Residues 12–34 (LFLLLLTGGVYPLLTTALGQWWF) traverse the membrane as a helical segment.

The protein belongs to the KdpC family. As to quaternary structure, the system is composed of three essential subunits: KdpA, KdpB and KdpC.

It localises to the cell inner membrane. Functionally, part of the high-affinity ATP-driven potassium transport (or Kdp) system, which catalyzes the hydrolysis of ATP coupled with the electrogenic transport of potassium into the cytoplasm. This subunit acts as a catalytic chaperone that increases the ATP-binding affinity of the ATP-hydrolyzing subunit KdpB by the formation of a transient KdpB/KdpC/ATP ternary complex. The polypeptide is Potassium-transporting ATPase KdpC subunit (Salmonella choleraesuis (strain SC-B67)).